The primary structure comprises 1863 residues: MDLSALRVEEVQNVINAMQKILECPICLELIKEPVSTKCDHIFCKFCMLKLLNQKKGPSQCPLCKNDITKRSLQESTRFSQLVEELLKIICAFQLDTGLEYANSYNFAKKENNSPEHLKDEVSIIQSMGYRNRAKRLLQSEPENPSLQETSLSVQLSNLGTVRTLRTKQRIQPQKTSVYIELGSDSSEDTVNKATYCSVGDQELLQITPQGTRDEISLDSAKKAACEFSETDVTNTEHHQPSNNDLNTTEKRAAERHPEKYQGSSVSNLHVEPCGTNTHASSLQHENSSLLLTKDRMNVEKAEFCNKSKQPGLARSQHNRWAGSKETCNDRRTPSTEKKVDLNADPLCERKEWNKQKLPCSENPRDTEDVPWITLNSSIQKVNEWFSRSDELLGSDDSHDGESESNAKVADVLDVLNEVDEYSGSSEKIDLLASDPHEALICKSERVHSKSVESNIEDKIFGKTYRKKASLPNLSHVTENLIIGAFVTEPQIIQERPLTNKLKRKRRPTSGLHPEDFIKKADLAVQKTPEMINQGTNQTEQNGQVMNITNSGHENKTKGDSIQNEKNPNPIESLEKESAFKTKAEPISSSISNMELELNIHNSKAPKKNRLRRKSSTRHIHALELVVSRNLSPPNCTELQIDSCSSSEEIKKKKYNQMPVRHSRNLQLMEGKEPATGAKKSNKPNEQTSKRHDSDTFPELKLTNAPGSFTKCSNTSELKEFVNPSLPREEKEEKLETVKVSNNAEDPKDLMLSGERVLQTERSVESSSISLVPGTDYGTQESISLLEVSTLGKAKTEPNKCVSQCAAFENPKGLIHGCSKDNRNDTEGFKYPLGHEVNHSRETSIEMEESELDAQYLQNTFKVSKRQSFAPFSNPGNAEEECATFSAHSGSLKKQSPKVTFECEQKEENQGKNESNIKPVQTVNITAGFPVVGQKDKPVDNAKCSIKGGSRFCLSSQFRGNETGLITPNKHGLLQNPYRIPPLFPIKSFVKTKCKKNLLEENFEEHSMSPEREMGNENIPSTVSTISRNNIRENVFKEASSSNINEVGSSTNEVGSSINEIGSSDENIQAELGRNRGPKLNAMLRLGVLQPEVYKQSLPGSNCKHPEIKKQEYEEVVQTVNTDFSPYLISDNLEQPMGSSHASQVCSETPDDLLDDGEIKEDTSFAENDIKESSAVFSKSVQKGELSRSPSPFTHTHLAQGYRRGAKKLESSEENLSSEDEELPCFQHLLFGKVNNIPSQSTRHSTVATECLSKNTEENLLSLKNSLNDCSNQVILAKASQEHHLSEETKCSASLFSSQCSELEDLTANTNTQDPFLIGSSKQMRHQSESQGVGLSDKELVSDDEERGTGLEENNQEEQSMDSNLGEAASGCESETSVSEDCSGLSSQSDILTTQQRDTMQHNLIKLQQEMAELEAVLEQHGSQPSNSYPSIISDSSALEDLRNPEQSTSEKAVLTSQKSSEYPISQNPEGLSADKFEVSADSSTSKNKEPGVERSSPSKCPSLDDRWYMHSCSGSLQNRNYPSQEELIKVVDVEEQQLEESGPHDLTETSYLPRQDLEGTPYLESGISLFSDDPESDPSEDRAPESARVGNIPSSTSALKVPQLKVAESAQSPAAAHTTDTAGYNAMEESVSREKPELTASTERVNKRMSMVVSGLTPEEFMLVYKFARKHHITLTNLITEETTHVVMKTDAEFVCERTLKYFLGIAGGKWVVSYFWVTQSIKERKMLNEHDFEVRGDVVNGRNHQGPKRARESQDRKIFRGLEICCYGPFTNMPTDQLEWMVQLCGASVVKELSSFTLGTGVHPIVVVQPDAWTEDNGFHAIGQMCEAPVVTREWVLDSVALYQCQELDTYLIPQIPHSHY.

Methionine 1 carries the N-acetylmethionine modification. Residues 24–65 (CPICLELIKEPVSTKCDHIFCKFCMLKLLNQKKGPSQCPLCK) form an RING-type zinc finger. Lysine 109 is covalently cross-linked (Glycyl lysine isopeptide (Lys-Gly) (interchain with G-Cter in SUMO2)). At serine 114 the chain carries Phosphoserine. The disordered stretch occupies residues 230 to 270 (ETDVTNTEHHQPSNNDLNTTEKRAAERHPEKYQGSSVSNLH). Residues 248–260 (TTEKRAAERHPEK) are compositionally biased toward basic and acidic residues. Lysine 301 participates in a covalent cross-link: Glycyl lysine isopeptide (Lys-Gly) (interchain with G-Cter in SUMO2). The segment at 306-338 (NKSKQPGLARSQHNRWAGSKETCNDRRTPSTEK) is disordered. A compositionally biased stretch (basic and acidic residues) spans 327–338 (TCNDRRTPSTEK). Lysine 339 participates in a covalent cross-link: Glycyl lysine isopeptide (Lys-Gly) (interchain with G-Cter in SUMO2). A phosphoserine mark is found at serine 395, serine 398, serine 423, and serine 434. Residues lysine 443, lysine 459, and lysine 519 each participate in a glycyl lysine isopeptide (Lys-Gly) (interchain with G-Cter in SUMO2) cross-link. A compositionally biased stretch (low complexity) spans 534–544 (QGTNQTEQNGQ). The segment at 534–570 (QGTNQTEQNGQVMNITNSGHENKTKGDSIQNEKNPNP) is disordered. Residue serine 551 is modified to Phosphoserine. Glycyl lysine isopeptide (Lys-Gly) (interchain with G-Cter in SUMO2) cross-links involve residues lysine 583 and lysine 654. A disordered region spans residues 654–709 (KYNQMPVRHSRNLQLMEGKEPATGAKKSNKPNEQTSKRHDSDTFPELKLTNAPGSF). 3 positions are modified to phosphoserine: serine 694, serine 708, and serine 725. Glycyl lysine isopeptide (Lys-Gly) (interchain with G-Cter in SUMO2) cross-links involve residues lysine 734 and lysine 739. 2 positions are modified to phosphoserine: serine 753 and serine 840. Residues lysine 918 and lysine 987 each participate in a glycyl lysine isopeptide (Lys-Gly) (interchain with G-Cter in SUMO2) cross-link. Serine 988 is modified (phosphoserine; by CHEK2). Serine 1009 is subject to Phosphoserine. Residue lysine 1079 forms a Glycyl lysine isopeptide (Lys-Gly) (interchain with G-Cter in SUMO2) linkage. The residue at position 1143 (serine 1143) is a Phosphoserine; by ATR; in vitro. A disordered region spans residues 1181-1216 (VQKGELSRSPSPFTHTHLAQGYRRGAKKLESSEENL). Serine 1189, serine 1191, serine 1211, serine 1217, and serine 1218 each carry phosphoserine. Position 1280 is a phosphoserine; by ATR; in vitro (serine 1280). The disordered stretch occupies residues 1322 to 1387 (KQMRHQSESQ…VSEDCSGLSS (66 aa)). Phosphoserine occurs at positions 1328, 1336, and 1342. Residues 1373 to 1387 (ESETSVSEDCSGLSS) are compositionally biased toward polar residues. Serine 1387 is modified (phosphoserine; by ATM and ATR). The residue at position 1394 (threonine 1394) is a Phosphothreonine; by ATR; in vitro. The interval 1397 to 1424 (RDTMQHNLIKLQQEMAELEAVLEQHGSQ) is interaction with PALB2. Serine 1423 bears the Phosphoserine; by ATM and ATR mark. Positions 1440–1505 (EDLRNPEQST…SSPSKCPSLD (66 aa)) are disordered. Positions 1445–1470 (PEQSTSEKAVLTSQKSSEYPISQNPE) are enriched in polar residues. Position 1457 is a phosphoserine; by ATR; in vitro (serine 1457). A Phosphoserine; by ATM modification is found at serine 1524. At serine 1542 the chain carries Phosphoserine. The tract at residues 1565–1596 (ESGISLFSDDPESDPSEDRAPESARVGNIPSS) is disordered. BRCT domains follow at residues 1642–1736 (STER…DFEV) and 1756–1855 (QDRK…TYLI).

Heterodimer with BARD1. Part of the BRCA1-associated genome surveillance complex (BASC), which contains BRCA1, MSH2, MSH6, MLH1, ATM, BLM, PMS2 and the MRE11-RAD50-NBN protein (MRN) complex. This association could be a dynamic process changing throughout the cell cycle and within subnuclear domains. Component of the BRCA1-A complex, at least composed of BRCA1, BARD1, UIMC1/RAP80, ABRAXAS1, BRCC3/BRCC36, BABAM2 and BABAM1/NBA1. Interacts (via the BRCT domains) with ABRAXAS1 (phosphorylated form); this is important for recruitment to sites of DNA damage. Can form a heterotetramer with two molecules of ABRAXAS1 (phosphorylated form). Component of the BRCA1-RBBP8 complex. Interacts (via the BRCT domains) with RBBP8 ('Ser-327' phosphorylated form); the interaction ubiquitinates RBBP8, regulates CHEK1 activation, and involves RBBP8 in BRCA1-dependent G2/M checkpoint control on DNA damage. Associates with RNA polymerase II holoenzyme. Interacts with SMC1A, NELFB, DCLRE1C, CLSPN. Interacts with CHEK1, CHEK2, BAP1, BRCC3, UBXN1 and PCLAF. Interacts (via BRCT domains) with BRIP1 (phosphorylated form). Interacts with FANCD2 (ubiquitinated form). Interacts with H2AX (phosphorylated on 'Ser-140'). Interacts (via the BRCT domains) with ACACA (phosphorylated form); the interaction prevents dephosphorylation of ACACA. Part of a BRCA complex containing BRCA1, BRCA2 and PALB2. Interacts directly with PALB2; the interaction is essential for its function in HRR. Interacts directly with BRCA2; the interaction occurs only in the presence of PALB2 which serves as the bridging protein. Interacts (via the BRCT domains) with LMO4; the interaction represses the transcriptional activity of BRCA1. Interacts (via the BRCT domains) with CCAR2 (via N-terminus); the interaction represses the transcriptional activator activity of BRCA1. Interacts with EXD2. Interacts (via C-terminus) with DHX9; this interaction is direct and links BRCA1 to the RNA polymerase II holoenzyme. Interacts with DNA helicase ZGRF1; the interaction is increased following DNA damage induction. Post-translationally, phosphorylated in response to IR, UV, and various stimuli that cause checkpoint activation, probably by ATM or ATR. Phosphorylation at Ser-988 by CHEK2 regulates mitotic spindle assembly. Phosphorylation by AURKA regulates centrosomal microtubule nucleation. Autoubiquitinated, undergoes 'Lys-6'-linked polyubiquitination. 'Lys-6'-linked polyubiquitination does not promote degradation. As to expression, isoform 1 and isoform 3 are widely expressed. Isoform 3 is reduced or absent in several breast and ovarian cancer cell lines.

It localises to the nucleus. The protein localises to the chromosome. Its subcellular location is the cytoplasm. It carries out the reaction S-ubiquitinyl-[E2 ubiquitin-conjugating enzyme]-L-cysteine + [acceptor protein]-L-lysine = [E2 ubiquitin-conjugating enzyme]-L-cysteine + N(6)-ubiquitinyl-[acceptor protein]-L-lysine.. It participates in protein modification; protein ubiquitination. The E3 ubiquitin-protein ligase activity is inhibited by phosphorylation by AURKA. Activity is increased by phosphatase treatment. In terms of biological role, E3 ubiquitin-protein ligase that specifically mediates the formation of 'Lys-6'-linked polyubiquitin chains and plays a central role in DNA repair by facilitating cellular responses to DNA damage. It is unclear whether it also mediates the formation of other types of polyubiquitin chains. The BRCA1-BARD1 heterodimer coordinates a diverse range of cellular pathways such as DNA damage repair, ubiquitination and transcriptional regulation to maintain genomic stability. Regulates centrosomal microtubule nucleation. Required for appropriate cell cycle arrests after ionizing irradiation in both the S-phase and the G2 phase of the cell cycle. Required for FANCD2 targeting to sites of DNA damage. Inhibits lipid synthesis by binding to inactive phosphorylated ACACA and preventing its dephosphorylation. Contributes to homologous recombination repair (HRR) via its direct interaction with PALB2, fine-tunes recombinational repair partly through its modulatory role in the PALB2-dependent loading of BRCA2-RAD51 repair machinery at DNA breaks. Component of the BRCA1-RBBP8 complex which regulates CHEK1 activation and controls cell cycle G2/M checkpoints on DNA damage via BRCA1-mediated ubiquitination of RBBP8. Acts as a transcriptional activator. The polypeptide is Breast cancer type 1 susceptibility protein (BRCA1) (Homo sapiens (Human)).